The following is a 227-amino-acid chain: 2,3-bisphosphoglycerate-dependent phosphoglycerate mutase (227 aa).

Substrate-binding positions include 7–14, 20–21, arginine 59, 86–89, lysine 97, 113–114, and 182–183; these read RHGQSEWN, TG, ERHY, RR, and GN. Catalysis depends on histidine 8, which acts as the Tele-phosphohistidine intermediate. Catalysis depends on glutamate 86, which acts as the Proton donor/acceptor.

This sequence belongs to the phosphoglycerate mutase family. BPG-dependent PGAM subfamily. As to quaternary structure, homodimer.

It carries out the reaction (2R)-2-phosphoglycerate = (2R)-3-phosphoglycerate. Its pathway is carbohydrate degradation; glycolysis; pyruvate from D-glyceraldehyde 3-phosphate: step 3/5. Its function is as follows. Catalyzes the interconversion of 2-phosphoglycerate and 3-phosphoglycerate. The chain is 2,3-bisphosphoglycerate-dependent phosphoglycerate mutase from Neisseria meningitidis serogroup A / serotype 4A (strain DSM 15465 / Z2491).